Consider the following 272-residue polypeptide: Tryptophan synthase alpha chain (272 aa).

Catalysis depends on proton acceptor residues Glu49 and Asp60.

This sequence belongs to the TrpA family. In terms of assembly, tetramer of two alpha and two beta chains.

It carries out the reaction (1S,2R)-1-C-(indol-3-yl)glycerol 3-phosphate + L-serine = D-glyceraldehyde 3-phosphate + L-tryptophan + H2O. It functions in the pathway amino-acid biosynthesis; L-tryptophan biosynthesis; L-tryptophan from chorismate: step 5/5. Its function is as follows. The alpha subunit is responsible for the aldol cleavage of indoleglycerol phosphate to indole and glyceraldehyde 3-phosphate. In Psychrobacter cryohalolentis (strain ATCC BAA-1226 / DSM 17306 / VKM B-2378 / K5), this protein is Tryptophan synthase alpha chain.